The chain runs to 282 residues: Lipoyl synthase (282 aa).

C37, C42, C48, C63, C67, C70, and S274 together coordinate [4Fe-4S] cluster. The region spanning 49–263 (WGKGTATFMI…KTIGLEKGFS (215 aa)) is the Radical SAM core domain.

Belongs to the radical SAM superfamily. Lipoyl synthase family. The cofactor is [4Fe-4S] cluster.

It is found in the cytoplasm. The catalysed reaction is [[Fe-S] cluster scaffold protein carrying a second [4Fe-4S](2+) cluster] + N(6)-octanoyl-L-lysyl-[protein] + 2 oxidized [2Fe-2S]-[ferredoxin] + 2 S-adenosyl-L-methionine + 4 H(+) = [[Fe-S] cluster scaffold protein] + N(6)-[(R)-dihydrolipoyl]-L-lysyl-[protein] + 4 Fe(3+) + 2 hydrogen sulfide + 2 5'-deoxyadenosine + 2 L-methionine + 2 reduced [2Fe-2S]-[ferredoxin]. The protein operates within protein modification; protein lipoylation via endogenous pathway; protein N(6)-(lipoyl)lysine from octanoyl-[acyl-carrier-protein]: step 2/2. Its function is as follows. Catalyzes the radical-mediated insertion of two sulfur atoms into the C-6 and C-8 positions of the octanoyl moiety bound to the lipoyl domains of lipoate-dependent enzymes, thereby converting the octanoylated domains into lipoylated derivatives. The sequence is that of Lipoyl synthase from Bacteroides thetaiotaomicron (strain ATCC 29148 / DSM 2079 / JCM 5827 / CCUG 10774 / NCTC 10582 / VPI-5482 / E50).